Consider the following 283-residue polypeptide: MAEITASLVKELRERTAAGMMECKKALVEANGDIELAIENMRKSGAIKAAKKAGNVAADGVIKTKIDGNYAVILEVNCQTDFVAKDGGFQAFADKVLDAAVAGKITDVDVLKAQFEEERVALVAKIGENINIRRVSALEGEVLGNYQHGARIGVLVAAKGADEELVKHLAMHVAASKPEFVKPEDVSAEVVAKEYQVQLEIAMQSGKPKEIAEKMVEGRMKKFTGEVSLTGQPFVMDPAKSVGQLLKEHNADVTNFIRFEVGEGIEKVETDFAAEVAAMSKQS.

The interval 80–83 is involved in Mg(2+) ion dislocation from EF-Tu; that stretch reads TDFV.

The protein belongs to the EF-Ts family.

It is found in the cytoplasm. In terms of biological role, associates with the EF-Tu.GDP complex and induces the exchange of GDP to GTP. It remains bound to the aminoacyl-tRNA.EF-Tu.GTP complex up to the GTP hydrolysis stage on the ribosome. The protein is Elongation factor Ts of Pectobacterium atrosepticum (strain SCRI 1043 / ATCC BAA-672) (Erwinia carotovora subsp. atroseptica).